Here is a 103-residue protein sequence, read N- to C-terminus: Integration host factor subunit beta (103 aa).

The tract at residues 62-81 (RNPKTGESVALPGKHVPHFK) is disordered.

This sequence belongs to the bacterial histone-like protein family. Heterodimer of an alpha and a beta chain.

This protein is one of the two subunits of integration host factor, a specific DNA-binding protein that functions in genetic recombination as well as in transcriptional and translational control. The protein is Integration host factor subunit beta of Xanthomonas campestris pv. campestris (strain B100).